We begin with the raw amino-acid sequence, 445 residues long: Glutamate-1-semialdehyde 2,1-aminomutase (445 aa).

Lys264 is modified (N6-(pyridoxal phosphate)lysine).

It belongs to the class-III pyridoxal-phosphate-dependent aminotransferase family. HemL subfamily. Requires pyridoxal 5'-phosphate as cofactor.

The protein resides in the cytoplasm. It carries out the reaction (S)-4-amino-5-oxopentanoate = 5-aminolevulinate. The protein operates within porphyrin-containing compound metabolism; protoporphyrin-IX biosynthesis; 5-aminolevulinate from L-glutamyl-tRNA(Glu): step 2/2. The chain is Glutamate-1-semialdehyde 2,1-aminomutase from Halobacterium salinarum (strain ATCC 29341 / DSM 671 / R1).